Consider the following 909-residue polypeptide: Protein translocase subunit SecA (909 aa).

Residues glutamine 87, 105–109, and aspartate 507 each bind ATP; that span reads GEGKT. Residues 857–909 are disordered; sequence DTHSELAEEQPPVAENRENKQQPFVRKNEKVGRNDPCPCGSGKKYKQCHGKLN. Positions 871 to 889 are enriched in basic and acidic residues; that stretch reads ENRENKQQPFVRKNEKVGR. Cysteine 893, cysteine 895, cysteine 904, and histidine 905 together coordinate Zn(2+). The span at 899 to 909 shows a compositional bias: basic residues; sequence KKYKQCHGKLN.

This sequence belongs to the SecA family. Monomer and homodimer. Part of the essential Sec protein translocation apparatus which comprises SecA, SecYEG and auxiliary proteins SecDF-YajC and YidC. Zn(2+) is required as a cofactor.

The protein localises to the cell inner membrane. It localises to the cytoplasm. It carries out the reaction ATP + H2O + cellular proteinSide 1 = ADP + phosphate + cellular proteinSide 2.. Its function is as follows. Part of the Sec protein translocase complex. Interacts with the SecYEG preprotein conducting channel. Has a central role in coupling the hydrolysis of ATP to the transfer of proteins into and across the cell membrane, serving both as a receptor for the preprotein-SecB complex and as an ATP-driven molecular motor driving the stepwise translocation of polypeptide chains across the membrane. The polypeptide is Protein translocase subunit SecA (Nitrosomonas europaea (strain ATCC 19718 / CIP 103999 / KCTC 2705 / NBRC 14298)).